Here is a 123-residue protein sequence, read N- to C-terminus: Protein Wnt-7(I) (123 aa).

The O-palmitoleoyl serine; by PORCN moiety is linked to residue S1. Cysteines 89 and 104 form a disulfide. N90 carries an N-linked (GlcNAc...) asparagine glycan. The short motif at 121–123 (CKF) is the Microbody targeting signal element.

It belongs to the Wnt family. In terms of processing, palmitoleoylation is required for efficient binding to frizzled receptors. Depalmitoleoylation leads to Wnt signaling pathway inhibition.

It localises to the secreted. It is found in the extracellular space. The protein resides in the extracellular matrix. Functionally, ligand for members of the frizzled family of seven transmembrane receptors. Probable developmental protein. May be a signaling molecule which affects the development of discrete regions of tissues. Is likely to signal over only few cell diameters. This is Protein Wnt-7(I) (WNT-7(I)) from Eptatretus stoutii (Pacific hagfish).